The primary structure comprises 813 residues: Protein PPP4R3C1 (813 aa).

A disordered region spans residues 730–813; sequence NESESAIEGQ…PPPKRPNLST (84 aa). The span at 777 to 788 shows a compositional bias: acidic residues; sequence YDTDDENDDDPY.

This sequence belongs to the SMEK family.

This chain is Protein PPP4R3C1, found in Mus musculus (Mouse).